The chain runs to 161 residues: Large ribosomal subunit protein uL16 (161 aa).

The protein belongs to the universal ribosomal protein uL16 family.

The sequence is that of Large ribosomal subunit protein uL16 from Methanosphaera stadtmanae (strain ATCC 43021 / DSM 3091 / JCM 11832 / MCB-3).